Reading from the N-terminus, the 152-residue chain is Ribosome maturation factor RimP (152 aa).

Belongs to the RimP family.

The protein resides in the cytoplasm. In terms of biological role, required for maturation of 30S ribosomal subunits. The protein is Ribosome maturation factor RimP of Ectopseudomonas mendocina (strain ymp) (Pseudomonas mendocina).